The chain runs to 250 residues: MAAAGLALLCRRVSSALKSSRSLITPQVPACTGFFLSLLPKSTPNVTSFHQYRLLHTTLSRKGLEEFFDDPKNWGQEKVKSGAAWTCQQLRNKSNEDLHKLWYVLLKERNMLLTLEQEAKRQRLPMPSPERLDKVVDSMDALDKVVQEREDALRLLQTGQERARPGAWRRDIFGRIIWHKFKQWVIPWHLNKRYNRKRFFALPYVDHFLRLEREKRARIKARKENLERKKAKILLKKFPHLAEAQKSSLV.

K144 is subject to N6-acetyllysine.

It belongs to the universal ribosomal protein uL29 family. As to quaternary structure, component of the mitochondrial large ribosomal subunit (mt-LSU). Mature mammalian 55S mitochondrial ribosomes consist of a small (28S) and a large (39S) subunit. The 28S small subunit contains a 12S ribosomal RNA (12S mt-rRNA) and 30 different proteins. The 39S large subunit contains a 16S rRNA (16S mt-rRNA), a copy of mitochondrial valine transfer RNA (mt-tRNA(Val)), which plays an integral structural role, and 52 different proteins.

The protein resides in the mitochondrion. This Homo sapiens (Human) protein is Large ribosomal subunit protein uL29m (MRPL47).